Reading from the N-terminus, the 85-residue chain is Selenoprotein W (85 aa).

Residues 10-13 (CGAU) constitute a cross-link (cysteinyl-selenocysteine (Cys-Sec); redox-active). Residue Sec13 is a non-standard amino acid, selenocysteine.

The protein belongs to the SelWTH family. Selenoprotein W subfamily. Expressed ubiquitously with predominant expression in the pituitary, spinal cord, sciatic nerve, cerebral cortex, cerebral nuclei, thalamus, cerebellum, muscle, cartilage, trachea, gizzard and artery. Weakly expressed in pancreas, testis, ovary, kidney and veins.

The protein localises to the cytoplasm. In terms of biological role, plays a role as a glutathione (GSH)-dependent antioxidant. May be involved in a redox-related process. May play a role in the myopathies of selenium deficiency. The sequence is that of Selenoprotein W from Gallus gallus (Chicken).